A 1243-amino-acid polypeptide reads, in one-letter code: Interphotoreceptor matrix proteoglycan 2 (1243 aa).

Residues methionine 1–alanine 27 form the signal peptide. The Extracellular portion of the chain corresponds to serine 28–glycine 1106. The interval glycine 205–alanine 234 is disordered. Over residues alanine 207–serine 220 the composition is skewed to low complexity. Residues asparagine 221–proline 230 show a composition bias toward polar residues. N-linked (GlcNAc...) asparagine glycosylation occurs at asparagine 225. The region spanning alanine 235–asparagine 349 is the SEA 1 domain. Positions arginine 255–arginine 263 are hyaluronan-binding motif involved in chondroitin sulfate A-binding. Residues asparagine 297, asparagine 316, and asparagine 366 are each glycosylated (N-linked (GlcNAc...) asparagine). 3 O-linked (GalNAc...) threonine glycosylation sites follow: threonine 427, threonine 428, and threonine 429. An N-linked (GlcNAc...) asparagine glycan is attached at asparagine 582. Residues threonine 701, threonine 704, and threonine 712 are each glycosylated (O-linked (GalNAc...) threonine). Basic and acidic residues predominate over residues glutamate 748 to aspartate 762. Residues glutamate 748–serine 768 form a disordered region. Threonine 817 and threonine 888 each carry an O-linked (GalNAc...) threonine glycan. One can recognise an SEA 2 domain in the interval glycine 900–glutamate 1013. 2 N-linked (GlcNAc...) asparagine glycosylation sites follow: asparagine 945 and asparagine 959. EGF-like domains are found at residues glutamate 1013 to glutamine 1054 and serine 1055 to glutamate 1096. Cystine bridges form between cysteine 1017-cysteine 1028, cysteine 1022-cysteine 1039, cysteine 1041-cysteine 1053, cysteine 1057-cysteine 1070, cysteine 1064-cysteine 1080, and cysteine 1082-cysteine 1095. The tract at residues arginine 1083 to arginine 1091 is hyaluronan-binding motif involved in chondroitin sulfate C-binding. The helical transmembrane segment at isoleucine 1107 to valine 1127 threads the bilayer. The hyaluronan-binding motif involved in chondroitin sulfate A- and C-binding stretch occupies residues lysine 1128–arginine 1136. Over lysine 1128 to leucine 1243 the chain is Cytoplasmic. The interval arginine 1139–arginine 1147 is hyaluronan-binding motif involved in chondroitin sulfate C-binding. Residues lysine 1212 to arginine 1220 form a hyaluronan-binding motif involved in chondroitin sulfate A- and C-binding motif region.

Expressed in the retina (at protein level). Expressed in the pineal gland.

The protein resides in the photoreceptor outer segment membrane. The protein localises to the photoreceptor inner segment membrane. It localises to the secreted. Its subcellular location is the extracellular space. It is found in the extracellular matrix. The protein resides in the interphotoreceptor matrix. Its function is as follows. Chondroitin sulfate- and hyaluronan-binding proteoglycan involved in the organization of interphotoreceptor matrix; may participate in the maturation and maintenance of the light-sensitive photoreceptor outer segment. Binds heparin. In Mus musculus (Mouse), this protein is Interphotoreceptor matrix proteoglycan 2 (Impg2).